The following is a 125-amino-acid chain: Calcitonin receptor-stimulating peptide 1 (125 aa).

An N-terminal signal peptide occupies residues methionine 1–alanine 25. The propeptide occupies alanine 26 to glutamine 77. Cysteine 81 and cysteine 86 are oxidised to a cystine.

It belongs to the calcitonin family.

The protein resides in the secreted. In terms of biological role, stimulates cAMP production in porcine kidney cell line LLC-PK1 via the calcitonin receptor (CT) but not via the CT-like (CL) receptor. The sequence is that of Calcitonin receptor-stimulating peptide 1 (CRSP1) from Bos taurus (Bovine).